We begin with the raw amino-acid sequence, 224 residues long: PKHD-type hydroxylase Tgr7_2199 (224 aa).

In terms of domain architecture, Fe2OG dioxygenase spans 78-176 (KLSGAFFARY…RLVAVAWAES (99 aa)). Residues His96, Asp98, and His157 each contribute to the Fe cation site. Arg167 lines the 2-oxoglutarate pocket.

It depends on Fe(2+) as a cofactor. L-ascorbate serves as cofactor.

This Thioalkalivibrio sulfidiphilus (strain HL-EbGR7) protein is PKHD-type hydroxylase Tgr7_2199.